The chain runs to 161 residues: ATP synthase subunit b (161 aa).

Residues 1–21 (MYLNATILGQVIAFILFVWFC) form a helical membrane-spanning segment.

This sequence belongs to the ATPase B chain family. F-type ATPases have 2 components, F(1) - the catalytic core - and F(0) - the membrane proton channel. F(1) has five subunits: alpha(3), beta(3), gamma(1), delta(1), epsilon(1). F(0) has three main subunits: a(1), b(2) and c(10-14). The alpha and beta chains form an alternating ring which encloses part of the gamma chain. F(1) is attached to F(0) by a central stalk formed by the gamma and epsilon chains, while a peripheral stalk is formed by the delta and b chains.

The protein resides in the cell inner membrane. Functionally, f(1)F(0) ATP synthase produces ATP from ADP in the presence of a proton or sodium gradient. F-type ATPases consist of two structural domains, F(1) containing the extramembraneous catalytic core and F(0) containing the membrane proton channel, linked together by a central stalk and a peripheral stalk. During catalysis, ATP synthesis in the catalytic domain of F(1) is coupled via a rotary mechanism of the central stalk subunits to proton translocation. Its function is as follows. Component of the F(0) channel, it forms part of the peripheral stalk, linking F(1) to F(0). The sequence is that of ATP synthase subunit b from Blochmanniella floridana.